The sequence spans 129 residues: Glutaredoxin-like protein ECU08_1380 (129 aa).

Residues 26 to 126 form the Glutaredoxin domain; that stretch reads EADYGEMVRR…PLLTQNREPV (101 aa).

This sequence belongs to the glutaredoxin family.

It localises to the cytoplasm. In terms of biological role, has a glutathione-disulfide oxidoreductase activity in the presence of NADPH and glutathione reductase. Reduces low molecular weight disulfides and proteins. The protein is Glutaredoxin-like protein ECU08_1380 of Encephalitozoon cuniculi (strain GB-M1) (Microsporidian parasite).